The sequence spans 545 residues: Phenylalanine--tRNA ligase beta subunit (545 aa).

Residues 268–343 form the B5 domain; that stretch reads FLHKIQNVRE…MSIGYNNLEP (76 aa). Positions 321, 327, 330, and 331 each coordinate Mg(2+).

This sequence belongs to the phenylalanyl-tRNA synthetase beta subunit family. Type 2 subfamily. In terms of assembly, tetramer of two alpha and two beta subunits. Requires Mg(2+) as cofactor.

The protein resides in the cytoplasm. The enzyme catalyses tRNA(Phe) + L-phenylalanine + ATP = L-phenylalanyl-tRNA(Phe) + AMP + diphosphate + H(+). This is Phenylalanine--tRNA ligase beta subunit from Saccharolobus islandicus (strain M.14.25 / Kamchatka #1) (Sulfolobus islandicus).